We begin with the raw amino-acid sequence, 384 residues long: S-adenosylmethionine synthase (384 aa).

ATP is bound at residue His16. Asp18 serves as a coordination point for Mg(2+). A K(+)-binding site is contributed by Glu44. L-methionine contacts are provided by Glu57 and Gln100. Residues 100–110 (QSADIAMGVDE) form a flexible loop region. ATP is bound by residues 165–167 (DAK), Asp240, 246–247 (RK), Ala263, and Lys267. Asp240 lines the L-methionine pocket. Lys271 contributes to the L-methionine binding site.

The protein belongs to the AdoMet synthase family. Homotetramer; dimer of dimers. Mg(2+) serves as cofactor. The cofactor is K(+).

It localises to the cytoplasm. The catalysed reaction is L-methionine + ATP + H2O = S-adenosyl-L-methionine + phosphate + diphosphate. The protein operates within amino-acid biosynthesis; S-adenosyl-L-methionine biosynthesis; S-adenosyl-L-methionine from L-methionine: step 1/1. Its function is as follows. Catalyzes the formation of S-adenosylmethionine (AdoMet) from methionine and ATP. The overall synthetic reaction is composed of two sequential steps, AdoMet formation and the subsequent tripolyphosphate hydrolysis which occurs prior to release of AdoMet from the enzyme. This chain is S-adenosylmethionine synthase, found in Teredinibacter turnerae (strain ATCC 39867 / T7901).